The chain runs to 188 residues: Peptide deformylase (188 aa).

Residues C94 and H136 each coordinate Fe cation. E137 is an active-site residue. Residue H140 participates in Fe cation binding.

Belongs to the polypeptide deformylase family. Fe(2+) is required as a cofactor.

The enzyme catalyses N-terminal N-formyl-L-methionyl-[peptide] + H2O = N-terminal L-methionyl-[peptide] + formate. Its function is as follows. Removes the formyl group from the N-terminal Met of newly synthesized proteins. Requires at least a dipeptide for an efficient rate of reaction. N-terminal L-methionine is a prerequisite for activity but the enzyme has broad specificity at other positions. In Chlorobium phaeobacteroides (strain DSM 266 / SMG 266 / 2430), this protein is Peptide deformylase.